The primary structure comprises 310 residues: Phosphoribosylaminoimidazole-succinocarboxamide synthase (310 aa).

It belongs to the SAICAR synthetase family.

It carries out the reaction 5-amino-1-(5-phospho-D-ribosyl)imidazole-4-carboxylate + L-aspartate + ATP = (2S)-2-[5-amino-1-(5-phospho-beta-D-ribosyl)imidazole-4-carboxamido]succinate + ADP + phosphate + 2 H(+). The protein operates within purine metabolism; IMP biosynthesis via de novo pathway; 5-amino-1-(5-phospho-D-ribosyl)imidazole-4-carboxamide from 5-amino-1-(5-phospho-D-ribosyl)imidazole-4-carboxylate: step 1/2. The protein is Phosphoribosylaminoimidazole-succinocarboxamide synthase of Stenotrophomonas maltophilia (strain K279a).